The chain runs to 433 residues: Phosphomethylpyrimidine synthase (433 aa).

Substrate contacts are provided by residues N66, M94, Y123, H162, 184 to 186, 225 to 228, and E264; these read SRG and DALR. H268 serves as a coordination point for Zn(2+). Y291 contacts substrate. H332 serves as a coordination point for Zn(2+). Residues C408, C411, and C415 each contribute to the [4Fe-4S] cluster site.

It belongs to the ThiC family. [4Fe-4S] cluster is required as a cofactor.

It carries out the reaction 5-amino-1-(5-phospho-beta-D-ribosyl)imidazole + S-adenosyl-L-methionine = 4-amino-2-methyl-5-(phosphooxymethyl)pyrimidine + CO + 5'-deoxyadenosine + formate + L-methionine + 3 H(+). It functions in the pathway cofactor biosynthesis; thiamine diphosphate biosynthesis. In terms of biological role, catalyzes the synthesis of the hydroxymethylpyrimidine phosphate (HMP-P) moiety of thiamine from aminoimidazole ribotide (AIR) in a radical S-adenosyl-L-methionine (SAM)-dependent reaction. This chain is Phosphomethylpyrimidine synthase, found in Saccharolobus islandicus (strain M.14.25 / Kamchatka #1) (Sulfolobus islandicus).